The sequence spans 221 residues: UPF0319 protein NTHI1987 (221 aa).

An N-terminal signal peptide occupies residues 1–21 (MKLRAVVLGLATLCTSTATFA).

This sequence belongs to the UPF0319 family.

The polypeptide is UPF0319 protein NTHI1987 (Haemophilus influenzae (strain 86-028NP)).